The following is a 266-amino-acid chain: Type III pantothenate kinase (266 aa).

An ATP-binding site is contributed by 11–18 (DIGNTSTV). 111 to 114 (GADR) contributes to the substrate binding site. The active-site Proton acceptor is D113. A K(+)-binding site is contributed by D135. T138 serves as a coordination point for ATP. T190 contacts substrate.

It belongs to the type III pantothenate kinase family. Homodimer. Requires NH4(+) as cofactor. K(+) is required as a cofactor.

It is found in the cytoplasm. The enzyme catalyses (R)-pantothenate + ATP = (R)-4'-phosphopantothenate + ADP + H(+). The protein operates within cofactor biosynthesis; coenzyme A biosynthesis; CoA from (R)-pantothenate: step 1/5. Catalyzes the phosphorylation of pantothenate (Pan), the first step in CoA biosynthesis. The chain is Type III pantothenate kinase from Deinococcus geothermalis (strain DSM 11300 / CIP 105573 / AG-3a).